The sequence spans 267 residues: Thymidylate synthase (267 aa).

Arg-25 provides a ligand contact to dUMP. His-55 lines the (6R)-5,10-methylene-5,6,7,8-tetrahydrofolate pocket. Arg-130–Arg-131 contributes to the dUMP binding site. The active-site Nucleophile is Cys-150. Residues Arg-170–Asp-173, Asn-181, and His-211–Tyr-213 contribute to the dUMP site. Asp-173 is a (6R)-5,10-methylene-5,6,7,8-tetrahydrofolate binding site. Position 266 (Ala-266) interacts with (6R)-5,10-methylene-5,6,7,8-tetrahydrofolate.

This sequence belongs to the thymidylate synthase family. Bacterial-type ThyA subfamily. As to quaternary structure, homodimer.

The protein localises to the cytoplasm. The enzyme catalyses dUMP + (6R)-5,10-methylene-5,6,7,8-tetrahydrofolate = 7,8-dihydrofolate + dTMP. It participates in pyrimidine metabolism; dTTP biosynthesis. Catalyzes the reductive methylation of 2'-deoxyuridine-5'-monophosphate (dUMP) to 2'-deoxythymidine-5'-monophosphate (dTMP) while utilizing 5,10-methylenetetrahydrofolate (mTHF) as the methyl donor and reductant in the reaction, yielding dihydrofolate (DHF) as a by-product. This enzymatic reaction provides an intracellular de novo source of dTMP, an essential precursor for DNA biosynthesis. The polypeptide is Thymidylate synthase (Corynebacterium efficiens (strain DSM 44549 / YS-314 / AJ 12310 / JCM 11189 / NBRC 100395)).